Here is a 717-residue protein sequence, read N- to C-terminus: uncharacterized protein (717 aa).

Residues 19–38 traverse the membrane as a helical segment; that stretch reads VFLSTIFVSIIFCLGILFLV.

To E.coli YtfN.

The protein resides in the membrane. This is an uncharacterized protein from Buchnera aphidicola subsp. Baizongia pistaciae (strain Bp).